We begin with the raw amino-acid sequence, 231 residues long: Membrane protein YknW (231 aa).

The next 5 helical transmembrane spans lie at 38-58, 93-113, 128-148, 171-191, and 205-225; these read VWGP…LQSL, GAII…WLCV, LSLF…IVAF, LASV…LLAI, and WISA…SGLI.

As to quaternary structure, interacts with a complex composed of YknX, YknY and YknZ.

Its subcellular location is the cell membrane. Functionally, part of an unusual four-component transporter, which is required for protection against the killing factor SdpC (sporulation-delaying protein). Has a role in the assembly of the YknXYZ complex. The chain is Membrane protein YknW (yknW) from Bacillus subtilis (strain 168).